The chain runs to 394 residues: Quinolinate synthase (394 aa).

Iminosuccinate-binding residues include H57 and S74. C121 is a binding site for [4Fe-4S] cluster. Residues 153 to 155 and S174 each bind iminosuccinate; that span reads YMN. C243 lines the [4Fe-4S] cluster pocket. Iminosuccinate-binding positions include 269–271 and T286; that span reads HPE. C333 is a binding site for [4Fe-4S] cluster.

Belongs to the quinolinate synthase family. Type 3 subfamily. The cofactor is [4Fe-4S] cluster.

The protein localises to the cytoplasm. It carries out the reaction iminosuccinate + dihydroxyacetone phosphate = quinolinate + phosphate + 2 H2O + H(+). It functions in the pathway cofactor biosynthesis; NAD(+) biosynthesis; quinolinate from iminoaspartate: step 1/1. In terms of biological role, catalyzes the condensation of iminoaspartate with dihydroxyacetone phosphate to form quinolinate. The sequence is that of Quinolinate synthase from Corynebacterium glutamicum (strain ATCC 13032 / DSM 20300 / JCM 1318 / BCRC 11384 / CCUG 27702 / LMG 3730 / NBRC 12168 / NCIMB 10025 / NRRL B-2784 / 534).